The sequence spans 331 residues: MRSIKCVIIGDGAVGKTSLLISYTTNSFPTDYVPTVFDNYSTTIAIPNGTASSPLELDNGNDKRGSLSSASSSPSTDRKLYKINLWDTAGQEDYDRLRPLCYPQTDIFLICFSVSEHASFANVTEKWLPELKQTSNIEGTSLYTKLGKYPILLVGTKSDLRDDPATQKKLQEANSDYVSQEEIDELVQRCGFMGYTECSAATQAGVREVFEQAVRYAIYEPESPNQKSANHTLTDELTTATTNTNGDKNIREQKQQPHHNNSTDSTLPKGSLQQEKEALNIKPTKKGQKDKIHEQSKSKGSKIASNNHHNKQAKPKTRNDKKKKKSKCVIL.

10-17 is a GTP binding site; that stretch reads GDGAVGKT. A disordered region spans residues 51–76; that stretch reads ASSPLELDNGNDKRGSLSSASSSPST. Low complexity predominate over residues 66–75; sequence SLSSASSSPS. GTP contacts are provided by residues 87–91 and 156–159; these read DTAGQ and TKSD. Phosphoserine is present on residues serine 223 and serine 228. A phosphothreonine mark is found at threonine 232 and threonine 244. The interval 239-331 is disordered; sequence TATTNTNGDK…KKKKSKCVIL (93 aa). Residues 258 to 273 show a composition bias toward polar residues; the sequence is HHNNSTDSTLPKGSLQ. Lysine 276 is covalently cross-linked (Glycyl lysine isopeptide (Lys-Gly) (interchain with G-Cter in ubiquitin)). Residues 287–297 show a composition bias toward basic and acidic residues; that stretch reads GQKDKIHEQSK. Residues 308–331 are compositionally biased toward basic residues; that stretch reads HHNKQAKPKTRNDKKKKKSKCVIL. Cysteine 328 carries the post-translational modification Cysteine methyl ester. Residue cysteine 328 is the site of S-geranylgeranyl cysteine attachment. A propeptide spans 329–331 (removed in mature form); that stretch reads VIL.

This sequence belongs to the small GTPase superfamily. Rho family. In terms of assembly, interacts with RGD2.

It is found in the membrane. It localises to the mitochondrion. Its function is as follows. Small GTPase that negatively regulates a MAP kinase branch, downstream of SLT2, of the PKC1-mediated signal transduction pathway. With its specific guanine nucleotide exchange factor (GEF), the heterodimeric complex DCK1/LMO1, relocates to mitochondria upon oxidative stress and triggers cell death. The DCK1/LMO1/RHO5 signaling module that mediates mitochondrial turnover under nitrogen starvation conditions via mitophagy. The DCK1/LMO1/RHO5 signaling module also plays a role in cell wall integrity signaling. The sequence is that of GTP-binding protein RHO5 from Saccharomyces cerevisiae (strain ATCC 204508 / S288c) (Baker's yeast).